We begin with the raw amino-acid sequence, 430 residues long: Isochorismate synthase MenF (430 aa).

Lysine 187 serves as the catalytic Proton acceptor. Glutamate 237 serves as the catalytic Proton donor. The Mg(2+) site is built by glutamate 281 and glutamate 414.

The protein belongs to the isochorismate synthase family. Mg(2+) is required as a cofactor.

The enzyme catalyses chorismate = isochorismate. It functions in the pathway quinol/quinone metabolism; 1,4-dihydroxy-2-naphthoate biosynthesis; 1,4-dihydroxy-2-naphthoate from chorismate: step 1/7. It participates in quinol/quinone metabolism; menaquinone biosynthesis. Catalyzes the conversion of chorismate to isochorismate. The sequence is that of Isochorismate synthase MenF from Haemophilus influenzae (strain ATCC 51907 / DSM 11121 / KW20 / Rd).